Reading from the N-terminus, the 537-residue chain is Leucine-rich repeat LGI family member 4 (537 aa).

The first 19 residues, 1-19 (MGGAGILLFLLAWAGAGVA), serve as a signal peptide directing secretion. LRR repeat units follow at residues 53–74 (TLLS…SFLK), 77–98 (SLHL…AFIG), 101–122 (YLQY…ALRG), and 125–146 (SLTH…LFRG). Residues 158–208 (NPFQCDCRVLWLLQWMPTVNASVGTGACAGPPAVAQIQLNHLDPKKFKCRA) form the LRRCT domain. The N-linked (GlcNAc...) asparagine glycan is linked to Asn-177. EAR repeat units follow at residues 210 to 252 (ELSW…VWDY), 256 to 298 (RFRP…SRSS), 302 to 349 (RLTP…CRDG), 351 to 394 (GFYP…HWVG), 396 to 439 (RFER…RWDG), 441 to 483 (MFRL…RFES), and 487 to 532 (ILEP…QHHE).

As to quaternary structure, can bind to ADAM11, ADAM22 and ADAM23. As to expression, brain. Expressed in the entire developing peripheral nerves. Strongly expressed in the trigeminal nerve and ganglion and particularly abundant in the boundary cap cells - a transient population of cells that contributes to the Schwann cell population of the dorsal root nerve.

It localises to the secreted. Its function is as follows. Component of Schwann cell signaling pathway(s) that controls axon segregation and myelin formation. In Mus musculus (Mouse), this protein is Leucine-rich repeat LGI family member 4 (Lgi4).